The primary structure comprises 134 residues: Large ribosomal subunit protein uL16 (134 aa).

Residues 1–20 (MLLQPKRTKFRKMHKGRNRG) show a composition bias toward basic residues. The disordered stretch occupies residues 1 to 21 (MLLQPKRTKFRKMHKGRNRGT).

Belongs to the universal ribosomal protein uL16 family. In terms of assembly, part of the 50S ribosomal subunit.

Binds 23S rRNA and is also seen to make contacts with the A and possibly P site tRNAs. The protein is Large ribosomal subunit protein uL16 of Blochmanniella pennsylvanica (strain BPEN).